The chain runs to 254 residues: Type II methyl-directed restriction enzyme DpnI (254 aa).

It belongs to the DpnI type II restriction endonuclease family.

It carries out the reaction Endonucleolytic cleavage of DNA to give specific double-stranded fragments with terminal 5'-phosphates.. In terms of biological role, an M and P subtype restriction enzyme that recognizes the double-stranded, methylated sequence 5'-G(Me)ATC-3' and cleaves after A-2. In Streptococcus pneumoniae serotype 4 (strain ATCC BAA-334 / TIGR4), this protein is Type II methyl-directed restriction enzyme DpnI.